Reading from the N-terminus, the 64-residue chain is Large ribosomal subunit protein bL32 (64 aa).

Belongs to the bacterial ribosomal protein bL32 family.

The chain is Large ribosomal subunit protein bL32 from Bifidobacterium longum (strain DJO10A).